Reading from the N-terminus, the 376-residue chain is Erythronate-4-phosphate dehydrogenase (376 aa).

Residues Ser45 and Thr66 each coordinate substrate. The NAD(+) site is built by Asp146 and Thr175. Arg209 is an active-site residue. Position 233 (Asp233) interacts with NAD(+). Glu238 is a catalytic residue. His255 serves as the catalytic Proton donor. Gly258 serves as a coordination point for NAD(+). Substrate is bound at residue Tyr259.

It belongs to the D-isomer specific 2-hydroxyacid dehydrogenase family. PdxB subfamily. In terms of assembly, homodimer.

It localises to the cytoplasm. The enzyme catalyses 4-phospho-D-erythronate + NAD(+) = (R)-3-hydroxy-2-oxo-4-phosphooxybutanoate + NADH + H(+). Its pathway is cofactor biosynthesis; pyridoxine 5'-phosphate biosynthesis; pyridoxine 5'-phosphate from D-erythrose 4-phosphate: step 2/5. Its function is as follows. Catalyzes the oxidation of erythronate-4-phosphate to 3-hydroxy-2-oxo-4-phosphonooxybutanoate. In Baumannia cicadellinicola subsp. Homalodisca coagulata, this protein is Erythronate-4-phosphate dehydrogenase.